We begin with the raw amino-acid sequence, 307 residues long: Ribonuclease HII (307 aa).

The 192-residue stretch at 44–235 folds into the RNase H type-2 domain; it reads EPVAGVDEAG…VRRAGGRMEL (192 aa). D50, E51, and D144 together coordinate a divalent metal cation. Residues 241–307 are disordered; it reads ADSDDSPGFA…SRPAELLEIP (67 aa). The segment covering 250 to 280 has biased composition (low complexity); that stretch reads ASGPAEAVPGPAGSAGAASAAARPAAAGPAG. The span at 287-296 shows a compositional bias: basic and acidic residues; that stretch reads RAADLRDNGD.

The protein belongs to the RNase HII family. Mn(2+) serves as cofactor. Requires Mg(2+) as cofactor.

It localises to the cytoplasm. The catalysed reaction is Endonucleolytic cleavage to 5'-phosphomonoester.. Functionally, endonuclease that specifically degrades the RNA of RNA-DNA hybrids. The polypeptide is Ribonuclease HII (Acidothermus cellulolyticus (strain ATCC 43068 / DSM 8971 / 11B)).